Here is a 223-residue protein sequence, read N- to C-terminus: MQLERLQKKLGYQFANLDYLTQALTHRSAASKNNERLEFLGDSILNFAIGKALYEKFPKANEGELSRMRAALVKEQTLAVVARQFELGEYMKLGAGELKSGGYRRESILSDCVEAIIAAVYLDAGIDRAMERVHCWYQQLLNDMQLGEAQKDPKTRLQEYLQGRKLPLPTYEVIDIKGEAHNQTFKVSCKVEKVDEIFIGNGTSRRKAEQDAALQVIKVLGIK.

Residues 3–125 form the RNase III domain; the sequence is LERLQKKLGY…IIAAVYLDAG (123 aa). Glu-38 provides a ligand contact to Mg(2+). Asp-42 is a catalytic residue. Residues Asp-111 and Glu-114 each coordinate Mg(2+). Glu-114 is an active-site residue. The region spanning 152-222 is the DRBM domain; the sequence is DPKTRLQEYL…ALQVIKVLGI (71 aa).

This sequence belongs to the ribonuclease III family. As to quaternary structure, homodimer. It depends on Mg(2+) as a cofactor.

The protein resides in the cytoplasm. It catalyses the reaction Endonucleolytic cleavage to 5'-phosphomonoester.. In terms of biological role, digests double-stranded RNA. Involved in the processing of primary rRNA transcript to yield the immediate precursors to the large and small rRNAs (23S and 16S). Processes some mRNAs, and tRNAs when they are encoded in the rRNA operon. Processes pre-crRNA and tracrRNA of type II CRISPR loci if present in the organism. The sequence is that of Ribonuclease 3 from Glaesserella parasuis serovar 5 (strain SH0165) (Haemophilus parasuis).